Reading from the N-terminus, the 400-residue chain is Subtilisin-like protease 7 (400 aa).

The signal sequence occupies residues 1–20 (MGFITKAIPLALAAASVING). Positions 21 to 119 (AEILETRAGV…IERDARVQIN (99 aa)) are excised as a propeptide. Residues 36-118 (KYIVVMNDGM…YIERDARVQI (83 aa)) form the Inhibitor I9 domain. The Peptidase S8 domain occupies 129–400 (SWGLARVGSK…GKLINNGSGK (272 aa)). Catalysis depends on charge relay system residues Asp161 and His192. Asn252 carries an N-linked (GlcNAc...) asparagine glycan. The active-site Charge relay system is the Ser346. N-linked (GlcNAc...) asparagine glycosylation occurs at Asn396.

It belongs to the peptidase S8 family.

Its subcellular location is the secreted. Secreted subtilisin-like serine protease with keratinolytic activity that contributes to pathogenicity. The polypeptide is Subtilisin-like protease 7 (SUB7) (Arthroderma gypseum (strain ATCC MYA-4604 / CBS 118893) (Microsporum gypseum)).